The primary structure comprises 567 residues: MWKHLLSGGLKVEQQNASAKKLILSVLNSTATKREARDYLTKYTRSDDSKQLNHCLLLIRHLNSLRQHEISELTSTVKKLGMLGLRPIFVIPPSRHIAKQAEILDIITTLAGFRPLQLQNSLSQSIDGTYTSILSSQNAILNNHELEVVPILKPYVYREKDASEFLTNDFTKFMQNLCKGNNTHIDKFFILNRIGGIPSNERNENSHVFVNLSQEYDCLKKDLKGQVDLLIERRPRTESLLHKLELHLNEDAINTLENQFKEHLQDLEMMNVVLSNLSSSATGLITTIESAASSSEKKNPLIYNILTDRSLISSSLPRFKKIRHTPPSGSRPAKKFHRMTYLEDYQQLDKSSPPDSALVTTVFKKGIDIKIFDYPKLTQFNSLSLPVEFRVKDSPQTNPLHKIDLSKLKGLIDRSFKRSLNLNHYLHRINGNIASIIVIGDYDGIAILTNEGPNDNPFVYLDKFAISPEMKGSLCISDIIFNLMVKKFPKELLWRSRNDNVVNKWYFQRSVGVLDLSIDLGDGNQTKSNFNLFYYGEPKSTNYGFHNLARLKEYAKHIRDIHPSWDK.

The region spanning Lys392 to Ile558 is the N-acetyltransferase domain.

The protein belongs to the acetyltransferase family.

Its subcellular location is the mitochondrion. It catalyses the reaction L-glutamate + acetyl-CoA = N-acetyl-L-glutamate + CoA + H(+). It functions in the pathway amino-acid biosynthesis; L-arginine biosynthesis; N(2)-acetyl-L-ornithine from L-glutamate: step 1/4. In terms of biological role, N-acetylglutamate synthase involved in arginine biosynthesis. In Vanderwaltozyma polyspora (strain ATCC 22028 / DSM 70294 / BCRC 21397 / CBS 2163 / NBRC 10782 / NRRL Y-8283 / UCD 57-17) (Kluyveromyces polysporus), this protein is Amino-acid acetyltransferase, mitochondrial (ARG2).